Here is a 463-residue protein sequence, read N- to C-terminus: Fumarate hydratase class II (463 aa).

Residues 97–99, 128–131, 138–140, and Thr-186 each bind substrate; these read SGT, HPND, and SSN. Catalysis depends on His-187, which acts as the Proton donor/acceptor. Ser-317 is an active-site residue. Residues Ser-318 and 323 to 325 each bind substrate; that span reads KVN.

It belongs to the class-II fumarase/aspartase family. Fumarase subfamily. Homotetramer.

It is found in the cytoplasm. It carries out the reaction (S)-malate = fumarate + H2O. The protein operates within carbohydrate metabolism; tricarboxylic acid cycle; (S)-malate from fumarate: step 1/1. Involved in the TCA cycle. Catalyzes the stereospecific interconversion of fumarate to L-malate. The protein is Fumarate hydratase class II of Campylobacter jejuni subsp. jejuni serotype O:2 (strain ATCC 700819 / NCTC 11168).